Here is a 155-residue protein sequence, read N- to C-terminus: Endoribonuclease YbeY (155 aa).

H120, H124, and H130 together coordinate Zn(2+).

Belongs to the endoribonuclease YbeY family. Zn(2+) serves as cofactor.

The protein resides in the cytoplasm. Its function is as follows. Single strand-specific metallo-endoribonuclease involved in late-stage 70S ribosome quality control and in maturation of the 3' terminus of the 16S rRNA. In Borreliella burgdorferi (strain ATCC 35210 / DSM 4680 / CIP 102532 / B31) (Borrelia burgdorferi), this protein is Endoribonuclease YbeY.